Reading from the N-terminus, the 467-residue chain is Putative sulfoquinovose importer (467 aa).

The next 12 helical transmembrane spans lie at 17 to 37 (IAYG…TLYL), 54 to 74 (IIFL…GFLL), 88 to 108 (PFIL…FIAT), 121 to 141 (ALFM…GAMI), 160 to 180 (GGAT…QSLF), 185 to 205 (VGYA…MMLC), 238 to 258 (LLVL…KLAI), 275 to 295 (WMGF…PLTV), 303 to 323 (VYLA…FWGS), 325 to 345 (SFTF…VNSL), 379 to 399 (ISAA…GYVP), and 414 to 434 (LIFI…GFFY).

Belongs to the sodium:galactoside symporter (TC 2.A.2) family.

The protein resides in the cell inner membrane. In terms of biological role, could be involved in sulfoquinovose import. This Escherichia coli (strain K12) protein is Putative sulfoquinovose importer (yihO).